The chain runs to 399 residues: Elongation factor Tu (399 aa).

The 195-residue stretch at 10-204 folds into the tr-type G domain; sequence KPHVNIGTIG…AVDASIPEPE (195 aa). Positions 19–26 are G1; it reads GHVDHGKT. 19–26 lines the GTP pocket; sequence GHVDHGKT. A Mg(2+)-binding site is contributed by Thr26. The segment at 60 to 64 is G2; it reads GITIN. The G3 stretch occupies residues 81–84; it reads DCPG. GTP is bound by residues 81–85 and 136–139; these read DCPGH and NKCD. A G4 region spans residues 136–139; the sequence is NKCD. Positions 174 to 176 are G5; the sequence is SGL.

It belongs to the TRAFAC class translation factor GTPase superfamily. Classic translation factor GTPase family. EF-Tu/EF-1A subfamily. As to quaternary structure, monomer.

It is found in the cytoplasm. The enzyme catalyses GTP + H2O = GDP + phosphate + H(+). GTP hydrolase that promotes the GTP-dependent binding of aminoacyl-tRNA to the A-site of ribosomes during protein biosynthesis. This Prochlorococcus marinus subsp. pastoris (strain CCMP1986 / NIES-2087 / MED4) protein is Elongation factor Tu.